The chain runs to 151 residues: D-aminoacyl-tRNA deacylase (151 aa).

A Gly-cisPro motif, important for rejection of L-amino acids motif is present at residues 138–139 (GP).

It belongs to the DTD family. In terms of assembly, homodimer.

It localises to the cytoplasm. The catalysed reaction is glycyl-tRNA(Ala) + H2O = tRNA(Ala) + glycine + H(+). It catalyses the reaction a D-aminoacyl-tRNA + H2O = a tRNA + a D-alpha-amino acid + H(+). In terms of biological role, an aminoacyl-tRNA editing enzyme that deacylates mischarged D-aminoacyl-tRNAs. Also deacylates mischarged glycyl-tRNA(Ala), protecting cells against glycine mischarging by AlaRS. Acts via tRNA-based rather than protein-based catalysis; rejects L-amino acids rather than detecting D-amino acids in the active site. By recycling D-aminoacyl-tRNA to D-amino acids and free tRNA molecules, this enzyme counteracts the toxicity associated with the formation of D-aminoacyl-tRNA entities in vivo and helps enforce protein L-homochirality. This chain is D-aminoacyl-tRNA deacylase, found in Magnetococcus marinus (strain ATCC BAA-1437 / JCM 17883 / MC-1).